A 512-amino-acid polypeptide reads, in one-letter code: Acid-sensing ion channel 2 (512 aa).

Residues 1–37 (MDLKESPSEGSLQPSSIQIFANTSTLHGIRHIFVYGP) lie on the Cytoplasmic side of the membrane. Phosphoserine is present on residues Ser-8 and Ser-11. The chain crosses the membrane as a helical span at residues 38 to 58 (LTIRRVLWAVAFVGSLGLLLV). Topologically, residues 59–427 (ESSERVSYYF…EQKKAYEVAA (369 aa)) are extracellular. 6 cysteine pairs are disulfide-bonded: Cys-92–Cys-193, Cys-289–Cys-364, Cys-307–Cys-360, Cys-311–Cys-358, Cys-320–Cys-342, and Cys-322–Cys-334. Residues Asn-365 and Asn-392 are each glycosylated (N-linked (GlcNAc...) asparagine). Residues 428-448 (LLGDIGGQMGLFIGASILTIL) form a helical membrane-spanning segment. A GAS motif; ion selectivity filter motif is present at residues 441-443 (GAS). At 449–512 (ELFDYIYELI…ALGTLEEIAC (64 aa)) the chain is on the cytoplasmic side.

This sequence belongs to the amiloride-sensitive sodium channel (TC 1.A.6) family. ASIC2 subfamily. Can form homotrimers. Heterotrimer; forms functional heterotrimers producing channel with different properties. Forms heterotrimers with ASIC1; while ASIC1 determines current amplitude, ASIC2 influences the properties of the current. Forms heterotrimers with ASIC3; resulting in channels with distinct properties. Interacts with STOM; STOM regulates the gating of ASIC2-containing channels. Interacts with PICK1; promotes ASIC3 phosphorylation by PKC and activation of ASIC2/ASIC3 heterotrimers. As to expression, expressed by sensory neurons. Expressed by nociceptive sensory neurons, spiral ganglion (SG) neurons and the retina (at protein level). Expressed in outer nuclear layer of retina (photoreceptors) and to a lower extent in distal and proximal inner nuclear layer.

The protein localises to the cell membrane. It carries out the reaction Na(+)(in) = Na(+)(out). The enzyme catalyses K(+)(in) = K(+)(out). The catalysed reaction is Li(+)(in) = Li(+)(out). With respect to regulation, inhibited by the diuretic drug amiloride. Its function is as follows. Forms pH-gated trimeric sodium channels that act as postsynaptic excitatory sensors in the nervous system. Upon extracellular acidification, these channels generate rapid, transient inward currents that fully desensitize. Highly selective for sodium, they are permeable to other cations. By forming heterotrimeric channels with ASIC1, could contribute to synaptic plasticity, learning, and memory. Additionally, as acid sensors at nerve terminals, plays a role in mechanosensation and phototransduction. In terms of biological role, has no pH-gated sodium channel activity per se but can associate with other ASICs to produce functional channels with specific properties. In Mus musculus (Mouse), this protein is Acid-sensing ion channel 2.